The sequence spans 488 residues: Ribulose bisphosphate carboxylase large chain (488 aa).

2 residues coordinate substrate: N127 and T177. The active-site Proton acceptor is K179. Position 181 (K181) interacts with substrate. Mg(2+) contacts are provided by K205, D207, and E208. K205 bears the N6-carboxylysine mark. The active-site Proton acceptor is H297. Substrate is bound by residues R298, H330, and S382.

The protein belongs to the RuBisCO large chain family. Type I subfamily. In terms of assembly, heterohexadecamer of 8 large chains and 8 small chains. Mg(2+) is required as a cofactor.

It is found in the plastid. Its subcellular location is the chloroplast. It carries out the reaction 2 (2R)-3-phosphoglycerate + 2 H(+) = D-ribulose 1,5-bisphosphate + CO2 + H2O. The catalysed reaction is D-ribulose 1,5-bisphosphate + O2 = 2-phosphoglycolate + (2R)-3-phosphoglycerate + 2 H(+). Functionally, ruBisCO catalyzes two reactions: the carboxylation of D-ribulose 1,5-bisphosphate, the primary event in carbon dioxide fixation, as well as the oxidative fragmentation of the pentose substrate in the photorespiration process. Both reactions occur simultaneously and in competition at the same active site. This Ectocarpus siliculosus (Brown alga) protein is Ribulose bisphosphate carboxylase large chain.